We begin with the raw amino-acid sequence, 437 residues long: Membrane protein NfeD1b (437 aa).

Helical transmembrane passes span 2 to 22 (LQIK…LLGV), 231 to 251 (WLTN…GLTV), 253 to 273 (LFSP…LLFF), 288 to 308 (LLFI…GGII), and 316 to 336 (IIAS…SLLI).

The protein belongs to the NfeD family.

It is found in the cell membrane. The chain is Membrane protein NfeD1b from Bacillus subtilis (strain 168).